The following is a 487-amino-acid chain: Protein nucleotidyltransferase YdiU (487 aa).

8 residues coordinate ATP: Gly90, Gly92, Arg93, Lys113, Asp125, Gly126, Arg176, and Arg183. Asp252 functions as the Proton acceptor in the catalytic mechanism. Mg(2+) is bound by residues Asn253 and Asp262. Asp262 provides a ligand contact to ATP.

This sequence belongs to the SELO family. Mg(2+) is required as a cofactor. Mn(2+) serves as cofactor.

It catalyses the reaction L-seryl-[protein] + ATP = 3-O-(5'-adenylyl)-L-seryl-[protein] + diphosphate. The enzyme catalyses L-threonyl-[protein] + ATP = 3-O-(5'-adenylyl)-L-threonyl-[protein] + diphosphate. The catalysed reaction is L-tyrosyl-[protein] + ATP = O-(5'-adenylyl)-L-tyrosyl-[protein] + diphosphate. It carries out the reaction L-histidyl-[protein] + UTP = N(tele)-(5'-uridylyl)-L-histidyl-[protein] + diphosphate. It catalyses the reaction L-seryl-[protein] + UTP = O-(5'-uridylyl)-L-seryl-[protein] + diphosphate. The enzyme catalyses L-tyrosyl-[protein] + UTP = O-(5'-uridylyl)-L-tyrosyl-[protein] + diphosphate. Nucleotidyltransferase involved in the post-translational modification of proteins. It can catalyze the addition of adenosine monophosphate (AMP) or uridine monophosphate (UMP) to a protein, resulting in modifications known as AMPylation and UMPylation. This chain is Protein nucleotidyltransferase YdiU, found in Pseudomonas syringae pv. tomato (strain ATCC BAA-871 / DC3000).